Reading from the N-terminus, the 473-residue chain is Ribosomal protein uS12 methylthiotransferase RimO (473 aa).

The MTTase N-terminal domain maps to 30–141 (ASVAVLHLGC…IVQIIERVER (112 aa)). Residues cysteine 39, cysteine 75, cysteine 104, cysteine 179, cysteine 183, and cysteine 186 each contribute to the [4Fe-4S] cluster site. Positions 165-394 (TTHAPVAYLR…MQVQQGITFR (230 aa)) constitute a Radical SAM core domain. Residues 397–463 (REQVGRVVPV…PYDLFGQVVA (67 aa)) enclose the TRAM domain.

It belongs to the methylthiotransferase family. RimO subfamily. Requires [4Fe-4S] cluster as cofactor.

It localises to the cytoplasm. It catalyses the reaction L-aspartate(89)-[ribosomal protein uS12]-hydrogen + (sulfur carrier)-SH + AH2 + 2 S-adenosyl-L-methionine = 3-methylsulfanyl-L-aspartate(89)-[ribosomal protein uS12]-hydrogen + (sulfur carrier)-H + 5'-deoxyadenosine + L-methionine + A + S-adenosyl-L-homocysteine + 2 H(+). Catalyzes the methylthiolation of an aspartic acid residue of ribosomal protein uS12. In Synechococcus sp. (strain JA-2-3B'a(2-13)) (Cyanobacteria bacterium Yellowstone B-Prime), this protein is Ribosomal protein uS12 methylthiotransferase RimO.